The following is a 701-amino-acid chain: Arachidonate 12-lipoxygenase, 12R-type (701 aa).

One can recognise a PLAT domain in the interval 2-119 (ATYKVKVATG…TLSLREATGK (118 aa)). Residues 120–701 (TTADDTLPIL…PVLIENSISI (582 aa)) enclose the Lipoxygenase domain. Fe cation is bound by residues His-398, His-403, His-578, Asn-582, and Ile-701.

It belongs to the lipoxygenase family. Fe cation serves as cofactor.

It localises to the cytoplasm. The protein resides in the perinuclear region. The catalysed reaction is (5Z,8Z,11Z,14Z)-eicosatetraenoate + O2 = (12R)-hydroperoxy-(5Z,8Z,10E,14Z)-eicosatetraenoate. It carries out the reaction N-[omega-(9Z,12Z)-octadecadienoyloxy]acyl-beta-D-glucosyl-(1&lt;-&gt;1)-octadecasphing-4E-enine + O2 = N-[omega-(9R)-hydroperoxy-(10E,12Z)-octadecadienoyloxy]acyl-beta-D-glucosyl-(1&lt;-&gt;1)-octadecasphing-4E-enine. It catalyses the reaction a N-[omega-(9Z,12Z)-octadecadienoyloxy]-acylsphin-4E-enine + O2 = a N-[omega-(9R)-hydroperoxy-(10E,12Z)-octadecadienoyloxy]-acylsphin-4E-enine. The enzyme catalyses (6Z,9Z,12Z)-octadecatrienoate + O2 = 10-hydroperoxy-(6Z,8E,12Z)-octadecatrienoate. The catalysed reaction is (4Z,7Z,10Z,13Z,16Z,19Z)-docosahexaenoate + O2 = 14-hydroperoxy-(4Z,7Z,10Z,12E,16Z,19Z)-docosahexaenoate. It carries out the reaction (8Z,11Z,14Z)-eicosatrienoate + O2 = (8Z,10E,14Z)-12-hydroperoxyeicosatrienoate. It catalyses the reaction (5Z,8Z,11Z,14Z,17Z)-eicosapentaenoate + O2 = (5Z,7Z,8Z,10E,14Z,17Z)-12-hydroperoxyeicosapentaenoate. The enzyme catalyses (6Z,9Z,12Z)-octadecatrienoate + O2 = 10R-hydroperoxy-(6Z,8E,12Z)-octadecatrienoate. The catalysed reaction is 1-O-methyl-(5Z,8Z,11Z,14Z)-eicosatetraenoate + O2 = 1-O-methyl (5Z,8Z,10E,12R,14Z)-hydroperoxyiecosatetraenoate. It carries out the reaction 1-O-methyl-(5Z,8Z,11Z,14Z)-eicosatetraenoate + O2 = 1-O-methyl-8-hydroperoxy-(5Z,9E,11Z,14Z)-eicosatetraenoate. It catalyses the reaction 1-O-methyl-(5Z,8Z,11Z,14Z)-eicosatetraenoate + O2 = 1-O-methyl-(8R)-hydroperoxy-(5Z,9E,11Z,14Z)-eicosatrienoate. The enzyme catalyses 1-O-methyl-(9Z,12Z)-octadecadienoate + O2 = 1-O-methyl-(9R)-hydroperoxy-(10E,12Z)-octadecadienoate. The catalysed reaction is 1-O-methyl-20-hydroxy-(5Z,8Z,11Z,14Z)-eicosatetraenoate + O2 = 1-O-methyl-8-hydroperoxy-20-hydroxy-(5Z,9E,11Z,14Z)-eicosatetraenoate. It carries out the reaction 1-O-methyl-20-hydroxy-(5Z,8Z,11Z,14Z)-eicosatetraenoate + O2 = 1-O-methyl-12-hydroperoxy-20-hydroxy-(5Z,8Z,10E,14Z)-eicosatetraenoate. It catalyses the reaction 1-O-methyl-20-hydroxy-(5Z,8Z,11Z,14Z)-eicosatetraenoate + O2 = 1-O-methyl-9-hydroperoxy-20-hydroxy-(5Z,7E,11Z,14Z)-eicosatetraenoate. The enzyme catalyses 1-O-methyl-(9Z,12Z)-octadecadienoate + O2 = 1-O-methyl-(13S)-hydroperoxy-(9Z,11E)-octadecadienoate. It participates in lipid metabolism; hydroperoxy eicosatetraenoic acid biosynthesis. The protein operates within lipid metabolism; sphingolipid metabolism. With respect to regulation, increased by calcium. Catalyzes the regio and stereo-specific incorporation of a single molecule of dioxygen into free and esterified polyunsaturated fatty acids generating lipid hydroperoxides that can be further reduced to the corresponding hydroxy species. In the skin, acts upstream of ALOXE3 on the lineolate moiety of esterified omega-hydroxyacyl-sphingosine (EOS) ceramides to produce an epoxy-ketone derivative, a crucial step in the conjugation of omega-hydroxyceramide to membrane proteins. Therefore plays a crucial role in the synthesis of corneocytes lipid envelope and the establishment of the skin barrier to water loss. May also play a role in the regulation of the expression of airway mucins. The chain is Arachidonate 12-lipoxygenase, 12R-type from Rattus norvegicus (Rat).